We begin with the raw amino-acid sequence, 156 residues long: Ribosome-binding factor A (156 aa).

The segment at 124–156 (TRAEYAGEAQPYRLEEEPEGSGDEVPPPGGDQR) is disordered.

This sequence belongs to the RbfA family. As to quaternary structure, monomer. Binds 30S ribosomal subunits, but not 50S ribosomal subunits or 70S ribosomes.

It localises to the cytoplasm. Functionally, one of several proteins that assist in the late maturation steps of the functional core of the 30S ribosomal subunit. Associates with free 30S ribosomal subunits (but not with 30S subunits that are part of 70S ribosomes or polysomes). Required for efficient processing of 16S rRNA. May interact with the 5'-terminal helix region of 16S rRNA. In Salinispora tropica (strain ATCC BAA-916 / DSM 44818 / JCM 13857 / NBRC 105044 / CNB-440), this protein is Ribosome-binding factor A.